The chain runs to 351 residues: Photosystem II D2 protein (351 aa).

A helical membrane pass occupies residues 39-59 (CAYLALGAWFTGTTFVSSWYT). Residue His-116 participates in chlorophyll a binding. A helical membrane pass occupies residues 123–139 (GFCLRQFEIARLVGLRP). Positions 128 and 141 each coordinate pheophytin a. A helical membrane pass occupies residues 151 to 164 (VFVSVFLLYPLGQA). His-196 contacts chlorophyll a. The helical transmembrane segment at 206–226 (GALLCAIHGATVENTLFEDGE) threads the bilayer. A plastoquinone is bound by residues His-213 and Phe-260. His-213 is a Fe cation binding site. His-267 lines the Fe cation pocket. The helical transmembrane segment at 277-293 (GLWVSSIGIVGLALNLR) threads the bilayer.

The protein belongs to the reaction center PufL/M/PsbA/D family. As to quaternary structure, PSII is composed of 1 copy each of membrane proteins PsbA, PsbB, PsbC, PsbD, PsbE, PsbF, PsbH, PsbI, PsbJ, PsbK, PsbL, PsbM, PsbT, PsbY, PsbZ, Psb30/Ycf12, at least 3 peripheral proteins of the oxygen-evolving complex and a large number of cofactors. It forms dimeric complexes. It depends on The D1/D2 heterodimer binds P680, chlorophylls that are the primary electron donor of PSII, and subsequent electron acceptors. It shares a non-heme iron and each subunit binds pheophytin, quinone, additional chlorophylls, carotenoids and lipids. There is also a Cl(-1) ion associated with D1 and D2, which is required for oxygen evolution. The PSII complex binds additional chlorophylls, carotenoids and specific lipids. as a cofactor.

The protein localises to the plastid. The protein resides in the chloroplast thylakoid membrane. It carries out the reaction 2 a plastoquinone + 4 hnu + 2 H2O = 2 a plastoquinol + O2. Functionally, photosystem II (PSII) is a light-driven water:plastoquinone oxidoreductase that uses light energy to abstract electrons from H(2)O, generating O(2) and a proton gradient subsequently used for ATP formation. It consists of a core antenna complex that captures photons, and an electron transfer chain that converts photonic excitation into a charge separation. The D1/D2 (PsbA/PsbD) reaction center heterodimer binds P680, the primary electron donor of PSII as well as several subsequent electron acceptors. D2 is needed for assembly of a stable PSII complex. In Cyanidium caldarium (Red alga), this protein is Photosystem II D2 protein.